The following is a 453-amino-acid chain: UPF0210 protein MM_0081 (453 aa).

It belongs to the UPF0210 family.

This is UPF0210 protein MM_0081 from Methanosarcina mazei (strain ATCC BAA-159 / DSM 3647 / Goe1 / Go1 / JCM 11833 / OCM 88) (Methanosarcina frisia).